An 877-amino-acid chain; its full sequence is Probable Ras GTPase-activating-like protein ngap (877 aa).

Positions 72 to 218 (TPSATYESLI…KDQKERELWF (147 aa)) constitute a C2 domain. The interval 350–456 (SDDGDISGLK…ETINLSSSIN (107 aa)) is disordered. Over residues 389–409 (TTATTTPSSTPSTPISPSSQS) the composition is skewed to low complexity. Positions 410 to 425 (NNIKTPDSKTRSSSNA) are enriched in polar residues. 2 stretches are compositionally biased toward low complexity: residues 426–438 (STNTPQTTPKSTG) and 447–456 (ETINLSSSIN). Positions 591–802 (GKCLYLLKSL…ENMKSFINTL (212 aa)) constitute a Ras-GAP domain. Residues 820–848 (LEKELACLYRHLIKQRQDMAEEMESTESE) adopt a coiled-coil conformation.

May function as a Ras GTPase-activating protein. This chain is Probable Ras GTPase-activating-like protein ngap (ngap), found in Dictyostelium discoideum (Social amoeba).